Consider the following 170-residue polypeptide: CDP-archaeol synthase (170 aa).

The next 5 helical transmembrane spans lie at 6-26 (LLWAFWYILPAYFANASPVLV), 53-73 (GLIGGVAIGTAVGALQYFITP), 83-103 (LLLAFLLSFGALFGDLVGSFF), 114-134 (PAIGLDQLGFLISALAFAYPV), and 140-160 (GQIIFLLVVSPFVHWGANYFA).

Belongs to the CDP-archaeol synthase family. The cofactor is Mg(2+).

It localises to the cell membrane. The enzyme catalyses 2,3-bis-O-(geranylgeranyl)-sn-glycerol 1-phosphate + CTP + H(+) = CDP-2,3-bis-O-(geranylgeranyl)-sn-glycerol + diphosphate. It functions in the pathway membrane lipid metabolism; glycerophospholipid metabolism. Catalyzes the formation of CDP-2,3-bis-(O-geranylgeranyl)-sn-glycerol (CDP-archaeol) from 2,3-bis-(O-geranylgeranyl)-sn-glycerol 1-phosphate (DGGGP) and CTP. This reaction is the third ether-bond-formation step in the biosynthesis of archaeal membrane lipids. In Thermococcus onnurineus (strain NA1), this protein is CDP-archaeol synthase.